The following is an 896-amino-acid chain: UPF0182 protein GM21_2279 (896 aa).

The next 7 membrane-spanning stretches (helical) occupy residues 6-26 (MTFILVAIAVIFPFIGYLLSF), 46-66 (VYAQTGAGLIFGLLLFAFLQL), 99-119 (LVRPVGILISLVLAFLAGNWG), 158-180 (LLKSFAGFMVLAASVLSAAAYYV), 201-221 (LAVLVGLFGLVVAAGFYLESF), 245-265 (TLRILTFLTPVAGVVLALGIW), and 271-291 (LALGPPVVIVALYLVGVRVYP).

Belongs to the UPF0182 family.

It localises to the cell membrane. The protein is UPF0182 protein GM21_2279 of Geobacter sp. (strain M21).